Here is a 424-residue protein sequence, read N- to C-terminus: Tol-Pal system protein TolB (424 aa).

The N-terminal stretch at 1 to 24 is a signal peptide; it reads MNKARAIARWISFLLLIAAGQVCA.

It belongs to the TolB family. As to quaternary structure, the Tol-Pal system is composed of five core proteins: the inner membrane proteins TolA, TolQ and TolR, the periplasmic protein TolB and the outer membrane protein Pal. They form a network linking the inner and outer membranes and the peptidoglycan layer.

The protein resides in the periplasm. In terms of biological role, part of the Tol-Pal system, which plays a role in outer membrane invagination during cell division and is important for maintaining outer membrane integrity. In Methylococcus capsulatus (strain ATCC 33009 / NCIMB 11132 / Bath), this protein is Tol-Pal system protein TolB.